A 353-amino-acid chain; its full sequence is MHFSSSSTSSTWTILITLGCLMLHASLSAAQLTPTFYDRSCPNVTNIVRETIVNELRSDPRIAASILRLHFHDCFVNGCDASILLDNTTSFRTEKDAFGNANSARGFPVIDRMKAAVERACPRTVSCADMLTIAAQQSVTLAGGPSWRVPLGRRDSLQAFLELANANLPAPFFTLPQLKASFRNVGLDRPSDLVALSGGHTFGKNQCQFILDRLYNFSNTGLPDPTLNTTYLQTLRGLCPLNGNRSALVDFDLRTPTVFDNKYYVNLKERKGLIQSDQELFSSPNATDTIPLVRAYADGTQTFFNAFVEAMNRMGNITPTTGTQGQIRLNCRVVNSNSLLHDVVDIVDFVSSM.

Positions 1–30 are cleaved as a signal peptide; that stretch reads MHFSSSSTSSTWTILITLGCLMLHASLSAA. Gln-31 carries the post-translational modification Pyrrolidone carboxylic acid. Intrachain disulfides connect Cys-41-Cys-121, Cys-74-Cys-79, Cys-127-Cys-331, and Cys-207-Cys-239. N-linked (GlcNAc...) asparagine glycosylation occurs at Asn-43. Residue His-72 is the Proton acceptor of the active site. Positions 73, 76, 78, 80, and 82 each coordinate Ca(2+). Asn-87 carries N-linked (GlcNAc...) asparagine glycosylation. Residue Pro-169 coordinates substrate. A heme b-binding site is contributed by His-200. Position 201 (Thr-201) interacts with Ca(2+). N-linked (GlcNAc...) asparagine glycans are attached at residues Asn-216, Asn-228, and Asn-244. Ca(2+)-binding residues include Asp-252, Thr-255, and Asp-260. A glycan (N-linked (GlcNAc...) asparagine) is linked at Asn-285.

This sequence belongs to the peroxidase family. Classical plant (class III) peroxidase subfamily. Heme b serves as cofactor. Ca(2+) is required as a cofactor. In terms of tissue distribution, preferentially expressed in roots, but also detected in flowers, leaves and stems.

It localises to the secreted. It is found in the vacuole. It carries out the reaction 2 a phenolic donor + H2O2 = 2 a phenolic radical donor + 2 H2O. Its function is as follows. Removal of H(2)O(2), oxidation of toxic reductants, biosynthesis and degradation of lignin, suberization, auxin catabolism, response to environmental stresses such as wounding, pathogen attack and oxidative stress. These functions might be dependent on each isozyme/isoform in each plant tissue. Functionally, may be implicated in the systemic acquired resistance response via the salicylic acid signal transduction pathway. Exhibits a Ca(2+)-pectate binding affinity which could be interpreted in vivo as a specificity to interact with the pectic structure of the cell wall. The polypeptide is Peroxidase 34 (PER34) (Arabidopsis thaliana (Mouse-ear cress)).